The chain runs to 281 residues: Endochitinase B (281 aa).

Residues 1–33 (MAMAKAGAPRVSAAQLVTLGLSLLCAVAGPAAA) form the signal peptide. Residues 34 to 68 (QNCGCQPNVCCSKFGYCGTTDEYCGDGCQSGPCRS) form the Chitin-binding type-1 domain. Cystine bridges form between Cys-36-Cys-44, Cys-38-Cys-50, Cys-43-Cys-57, and Cys-61-Cys-66. The tract at residues 69–78 (GGGGSSGGGG) is hinge region (Gly-rich). The interval 79 to 281 (ANVASVVTGS…GVDPGPNLTC (203 aa)) is catalytic. A disulfide bridge connects residues Cys-101 and Cys-150. Glu-145 acts as the Proton donor in catalysis. Asn-156 is a glycosylation site (N-linked (GlcNAc...) asparagine). 2 cysteine pairs are disulfide-bonded: Cys-162–Cys-171 and Cys-249–Cys-281. Asn-278 is a glycosylation site (N-linked (GlcNAc...) asparagine).

This sequence belongs to the glycosyl hydrolase 19 family. Chitinase class I subfamily.

The protein resides in the secreted. The enzyme catalyses Random endo-hydrolysis of N-acetyl-beta-D-glucosaminide (1-&gt;4)-beta-linkages in chitin and chitodextrins.. Defense against chitin-containing fungal pathogens. Its action is countered by fungal polyglycine hydrolases, that cleaves within its hinge region (Gly-rich) to disrupt chitin-binding. The protein is Endochitinase B of Zea mays (Maize).